The chain runs to 87 residues: MNKRVLLVIFFVTLLVADEVNSFSFFRKAKGFLKKIWKSKIARRLREKGMKALKNYANDVLNGPAEAPAPAAAAPEEPPVEQRRRRR.

Positions 1 to 22 are cleaved as a signal peptide; that stretch reads MNKRVLLVIFFVTLLVADEVNS. The segment covering 64 to 75 has biased composition (low complexity); sequence PAEAPAPAAAAP. The interval 64-87 is disordered; it reads PAEAPAPAAAAPEEPPVEQRRRRR.

It belongs to the non-disulfide-bridged peptide (NDBP) superfamily. Long chain multifunctional peptide (group 2) family. As to expression, expressed by the venom gland.

Its subcellular location is the secreted. Functionally, inhibits angiotensin-converting enzyme (ACE), but does not serve as substrate for the enzyme. Potentiates bradykinin (BK) on the isolated guinea pig ileum as well as the isolated rat uterus for contraction. Also potentiates in vivo the depressor effect of BK on arterial blood pressure in the normotensive anesthetized rat. This Lychas mucronatus (Chinese swimming scorpion) protein is Bradykinin-potentiating peptide NDBP12.